Reading from the N-terminus, the 151-residue chain is MLSCWVLLLALLGGACALPAPLGYSQALAQAVDSYNQRPEVQNAFRLLSADPEPGPNVQLSSLHNLNFTIMETRCQARSGAQLDSCEFKEDGLVKDCAAPVVLQGGRAVLDVTCVDSMADPVRVKRFWPLVPVAINTVAAGINLYKAIRRK.

Residues 1–17 (MLSCWVLLLALLGGACA) form the signal peptide. The propeptide occupies 18–122 (LPAPLGYSQA…TCVDSMADPV (105 aa)). Disulfide bonds link C75-C86 and C97-C114. The helical transmembrane segment at 128-148 (WPLVPVAINTVAAGINLYKAI) threads the bilayer.

This sequence belongs to the cathelicidin family. As to expression, detected in bone marrow, liver and lung.

The protein resides in the secreted. The protein localises to the membrane. Its function is as follows. May bind bacterial lipopolysaccharide (LPS). May have antimicrobial activity and play a role in the innate immune response. This is Cathelicidin-3 (CATHL3) from Gallus gallus (Chicken).